We begin with the raw amino-acid sequence, 203 residues long: MTTETFVKDVKPGLKNLSVLFIVLETGRVTKTKDGHEVRTCKVADKTGSINISVWDDLGNFIQPGDIIRLTKGYASLFKGCLTLYTGRGGDLQKIGEFCMVYSEVPNFSEPNPEYIAQQSQNKQAQAESGTGTNSHNSSSPAPPASDLENGNGSNSSGPPTHQSTAPTHSTSGRITRSQPNHSIPGAPNSVSNGKEPRRTGKR.

Positions 22–92 form a DNA-binding region, OB; the sequence is IVLETGRVTK…TLYTGRGGDL (71 aa). The tract at residues 111–203 is disordered; it reads PNPEYIAQQS…GKEPRRTGKR (93 aa). The segment covering 117–128 has biased composition (polar residues); sequence AQQSQNKQAQAE. The span at 129–140 shows a compositional bias: low complexity; the sequence is SGTGTNSHNSSS. A compositionally biased stretch (polar residues) spans 149–182; it reads ENGNGSNSSGPPTHQSTAPTHSTSGRITRSQPNH.

It belongs to the SOSS-B family. SOSS-B1 subfamily. Component of the SOSS complex, composed of soss-b (soss-b1/nabp2 or soss-b2/nabp1), soss-a/ints3 and soss-c/inip. SOSS complexes containing soss-b1/nabp2 are more abundant than complexes containing soss-b2/nabp1.

It is found in the nucleus. Its function is as follows. Component of the SOSS complex, a multiprotein complex that functions downstream of the MRN complex to promote DNA repair and G2/M checkpoint. In the SOSS complex, acts as a sensor of single-stranded DNA that binds to single-stranded DNA. The SOSS complex associates with DNA lesions and influences diverse endpoints in the cellular DNA damage response including cell-cycle checkpoint activation, recombinational repair and maintenance of genomic stability. Required for efficient homologous recombination-dependent repair of double-strand breaks (DSBs). The sequence is that of SOSS complex subunit B1 (nabp2) from Xenopus tropicalis (Western clawed frog).